Reading from the N-terminus, the 410-residue chain is Translation initiation factor 2 subunit gamma (410 aa).

The tr-type G domain maps to 9-202 (QAEVNIGMVG…AIEEFIPTPK (194 aa)). The G1 stretch occupies residues 18-25 (GHVDHGKT). Positions 21, 25, 46, and 48 each coordinate Mg(2+). Residue 21–26 (DHGKTT) coordinates GTP. The tract at residues 46–50 (GITIK) is G2. Cys-61, Cys-64, Cys-73, and Cys-76 together coordinate Zn(2+). Residues 90–93 (DAPG) are G3. Residues 145 to 148 (NKIE) and 180 to 182 (SAL) contribute to the GTP site. The interval 145–148 (NKIE) is G4. Positions 180 to 182 (SAL) are G5.

The protein belongs to the TRAFAC class translation factor GTPase superfamily. Classic translation factor GTPase family. EIF2G subfamily. As to quaternary structure, heterotrimer composed of an alpha, a beta and a gamma chain. The cofactor is Mg(2+).

The enzyme catalyses GTP + H2O = GDP + phosphate + H(+). In terms of biological role, eIF-2 functions in the early steps of protein synthesis by forming a ternary complex with GTP and initiator tRNA. This is Translation initiation factor 2 subunit gamma from Thermococcus kodakarensis (strain ATCC BAA-918 / JCM 12380 / KOD1) (Pyrococcus kodakaraensis (strain KOD1)).